A 355-amino-acid chain; its full sequence is Uroporphyrinogen decarboxylase (355 aa).

Residues 27-31, D77, Y154, T209, and H327 contribute to the substrate site; that span reads RQAGR.

The protein belongs to the uroporphyrinogen decarboxylase family. As to quaternary structure, homodimer.

The protein resides in the cytoplasm. It catalyses the reaction uroporphyrinogen III + 4 H(+) = coproporphyrinogen III + 4 CO2. It functions in the pathway porphyrin-containing compound metabolism; protoporphyrin-IX biosynthesis; coproporphyrinogen-III from 5-aminolevulinate: step 4/4. In terms of biological role, catalyzes the decarboxylation of four acetate groups of uroporphyrinogen-III to yield coproporphyrinogen-III. This Aeromonas salmonicida (strain A449) protein is Uroporphyrinogen decarboxylase.